Reading from the N-terminus, the 345-residue chain is Heat-inducible transcription repressor HrcA (345 aa).

Belongs to the HrcA family.

In terms of biological role, negative regulator of class I heat shock genes (grpE-dnaK-dnaJ and groELS operons). Prevents heat-shock induction of these operons. The polypeptide is Heat-inducible transcription repressor HrcA (Corynebacterium diphtheriae (strain ATCC 700971 / NCTC 13129 / Biotype gravis)).